The sequence spans 275 residues: Membrane protein insertase YidC 1 (275 aa).

Residues 1-25 form the signal peptide; it reads MRKVLRVKKNIKIARIVPLVLLLVA. Cys26 carries N-palmitoyl cysteine lipidation. Cys26 carries the S-diacylglycerol cysteine lipid modification. 5 helical membrane-spanning segments follow: residues 58 to 78, 129 to 149, 171 to 191, 198 to 216, and 222 to 240; these read SIGV…MPLF, YASL…FQAL, LYLL…LTNL, VMMT…FMGF, and VVLY…LLLL.

It belongs to the OXA1/ALB3/YidC family. Type 2 subfamily.

The protein localises to the cell membrane. Its function is as follows. Required for the insertion and/or proper folding and/or complex formation of integral membrane proteins into the membrane. Involved in integration of membrane proteins that insert both dependently and independently of the Sec translocase complex, as well as at least some lipoproteins. This is Membrane protein insertase YidC 1 from Streptococcus pyogenes serotype M1.